We begin with the raw amino-acid sequence, 453 residues long: Charged multivesicular body protein 7 (453 aa).

Residues 1-22 form a disordered region; that stretch reads MWSPEREAEAPAGGDPAGLLPP. The segment covering 10–22 has biased composition (low complexity); sequence APAGGDPAGLLPP. Ser232 carries the phosphoserine modification. Residues 243-312 adopt a coiled-coil conformation; that stretch reads QLMQSEQLLS…DTVQGILDRI (70 aa). Basic and acidic residues predominate over residues 392 to 403; that stretch reads TKEPLDLPDNPR. Disordered stretches follow at residues 392-417 and 431-453; these read TKEPLDLPDNPRNRHFTNSVPNPRIS and SEGGLVPSSKSPKRQLEPTLKPL. Thr408 carries the post-translational modification Phosphothreonine. Phosphoserine occurs at positions 410, 417, 431, and 441.

This sequence belongs to the SNF7 family. Interacts with CHMP4B, but not with VPS25. Interacts with LEMD2 (via C-terminus).

It localises to the cytoplasm. Its subcellular location is the nucleus envelope. Functionally, ESCRT-III-like protein required to recruit the ESCRT-III complex to the nuclear envelope (NE) during late anaphase. Together with SPAST, the ESCRT-III complex promotes NE sealing and mitotic spindle disassembly during late anaphase. Recruited to the reforming NE during anaphase by LEMD2. Plays a role in the endosomal sorting pathway. The sequence is that of Charged multivesicular body protein 7 (CHMP7) from Homo sapiens (Human).